The primary structure comprises 982 residues: MNQIPMQYFNLAKENYSKYGLSVIQLIQIGKFYELWHEPDTSSKQQAYSQAELLVESSIRSRSLEVTPPIEQVASLLDMKIISLGKRSLLQMGFPVYSLTTHLSTLLDKGWTVIVIDELVTNKSGPKQRAVSQVYSPSCNLEDCPELPYVLSIYFSQDDLLGITLFSAMNGHSIIFPVSWTDRDKVTRLLISYHIREIVIWADSGVCSNILINKIYNLLIGWNLFPSEPNAKIEAMGEILTNLPCYLSYRYENNSKEWLLLHIYIGINTEWLNKNYQKYTLSKIFQSTWTENVNQANLISLLGVLQFIKDRNPNLIKNLQLPECYNSVVSPLNLILCNRAEYQLDLLSKRGKLGGLLNLIDYCSTAMGKRLLKFRLLNPITDYSELNLRYKDISIFKRLLNQKIFDNSELKCIKDLSSLHRQWAICASSDTTLPPKKLSQIYHSYLFACQLISKLTNNIQLPPLVGPQLKSLIKEIERIFQVDSLLGDFKDVIQPIGNLPNLFEQRQTLRAQLTEWAEQISNIVFQDTTSIKAEYFNKEGYAFSISSKKLTKLEHYMMNTSISNNSIIVLGKRGSHHIITSPTIHKVSIELNELEEQINIYVKQTYHQELKRLYFSYSELFLPLVNMISRLDVALSGAITAIKFNYVEPCLTLAKTQQTKGFIEAANLRHPLVEQLNTQEECIAHNISLEDKGMLVFSVNGAGKSTLLRAIGVNVILAQAGMYVAADSFKLRPYNYLITRILGGDDLYRGQGTFEVEMRDLSTILQLANYNSLILGDEICHGTEVNSGTAILAATIERLINAQTSFVLSTHLHQVCSLIDSPVRYYHLSVIQQENSALIYERKLKPGPGPSQYGIEVMGHIINDKKFYNSALKYRKLINWEPPSQGELTVFRPSKYNAQVFIDSCEICGAPADAVHHIKPKSEHKKLCNRKLNRRSNLVPVCSSCHLDIHRNKISILGWKRTPKHKKLYWVYTNESLDSGTK.

698 to 705 (SVNGAGKS) contacts ATP. The 47-residue stretch at 905 to 951 (CEICGAPADAVHHIKPKSEHKKLCNRKLNRRSNLVPVCSSCHLDIHR) folds into the HNH domain.

This sequence belongs to the DNA mismatch repair MutS family.

The protein resides in the mitochondrion. In terms of biological role, may be involved in DNA-mismatch repair. The chain is Mitochondrial DNA mismatch repair protein mutS homolog from Sarcophyton glaucum (Toadstool umbrella leather coral).